An 89-amino-acid polypeptide reads, in one-letter code: uncharacterized protein (89 aa).

To Rhizobium NGR234A y4oN.

This is an uncharacterized protein from Sinorhizobium fredii (strain NBRC 101917 / NGR234).